Reading from the N-terminus, the 155-residue chain is Peptidyl-prolyl cis-trans isomerase ppi1 (155 aa).

The 154-residue stretch at 1–154 folds into the PPIase cyclophilin-type domain; sequence MANVELQTSL…EPLKIIKAVA (154 aa).

Belongs to the cyclophilin-type PPIase family. PPIL1 subfamily. In terms of assembly, interacts with cwf13/snw1.

It carries out the reaction [protein]-peptidylproline (omega=180) = [protein]-peptidylproline (omega=0). Functionally, PPIases accelerate the folding of proteins. It catalyzes the cis-trans isomerization of proline imidic peptide bonds in oligopeptides. The sequence is that of Peptidyl-prolyl cis-trans isomerase ppi1 (ppi1) from Schizosaccharomyces pombe (strain 972 / ATCC 24843) (Fission yeast).